The following is a 308-amino-acid chain: Snake venom metalloprotease inhibitor 02D01 (308 aa).

An N-terminal signal peptide occupies residues 1–23 (MFVSRLAASGLLLLSLLALSLDG). Positions 24 to 38 (KPLPQRQPHHIQPME) are excised as a propeptide. Q39 is modified (pyrrolidone carboxylic acid). A propeptide spanning residues 42 to 50 (LAPDAPPLE) is cleaved from the precursor. The residue at position 51 (Q51) is a Pyrrolidone carboxylic acid. A propeptide spanning residues 54–62 (LAPDAPPLE) is cleaved from the precursor. Pyrrolidone carboxylic acid is present on Q63. A propeptide spanning residues 66-74 (LAPAAPPLE) is cleaved from the precursor. Q75 bears the Pyrrolidone carboxylic acid mark. Positions 78–86 (LAPDAPPME) are excised as a propeptide. Pyrrolidone carboxylic acid is present on Q87. Positions 90–98 (LAPDAPPME) are excised as a propeptide. Residue Q99 is modified to Pyrrolidone carboxylic acid. Positions 102–110 (LAPDAPPME) are excised as a propeptide. Q111 carries the post-translational modification Pyrrolidone carboxylic acid. A propeptide spanning residues 114 to 122 (LAPDAPPME) is cleaved from the precursor. Q123 carries the pyrrolidone carboxylic acid modification. Residues 126–134 (LAPDAAPLE) constitute a propeptide that is removed on maturation. A Pyrrolidone carboxylic acid modification is found at Q135. Positions 138-146 (LAPDAPPME) are excised as a propeptide. Q147 carries the post-translational modification Pyrrolidone carboxylic acid. Residues 150–158 (LAPDAPPME) constitute a propeptide that is removed on maturation. Q159 is subject to Pyrrolidone carboxylic acid. Residues 162-249 (QPQIPSLMEQ…KQASQKWGRL (88 aa)) constitute a propeptide that is removed on maturation. Positions 172-182 (RQLSSGGTTAL) are enriched in polar residues. Disordered regions lie at residues 172–228 (RQLS…AAAT) and 252–279 (HDHDHHHHHHPGSSVGGGGGGGGGGARR). The segment covering 198-209 (VVGGGGGGGGGS) has biased composition (gly residues). Positions 210–227 (KAALALPKPPKAKGAAAA) are enriched in low complexity. Residues 265–277 (SVGGGGGGGGGGA) show a composition bias toward gly residues. A propeptide spanning residues 278-286 (RRLKGLAKK) is cleaved from the precursor. C292 and C308 form a disulfide bridge.

In the C-terminal section; belongs to the natriuretic peptide family. This sequence in the central section; belongs to the pHpG family. In terms of tissue distribution, expressed by the venom gland.

It is found in the secreted. PEKW and poly-His-poly-Gly peptides may serve as metalloproteinase inhibitors during glandular storage. Their inhibition may be instantly disengaged, by dilution or physiochemical change, when venom is injected into tissue of the prey. Its function is as follows. has a vasorelaxant activity in rat aortic strips and a diuretic potency in anesthetized rats. May act by activating natriuretic receptors (NPR1 and/or NPR2). The sequence is that of Snake venom metalloprotease inhibitor 02D01 from Echis ocellatus (Ocellated saw-scaled viper).